Consider the following 365-residue polypeptide: MSHNSFGHLFRVTTWGESHGPALGCVVDGCPPGIRFTLAEIQAWLDKRKPGQSRFVTQRREDDLVKVLSGVMLDDDGETMISTGTPISMMIENTDQRSKDYSEIAKRYRPGHADYTYDVKYGIRDYRGGGRSSARETAARVAAGGIARKVVPGLVVRAALVQIGKHRINRANWDWSEVNNNPFFAPDPAIVPVWEEYLDGIRKAGSSIGAVVEVIAEGVPAGIGAPIYGKLDQDIASNLMSINAVKGVEIGDGFATAELSGEENADEMRIGSDGKPVFLANHAGGILGGIATGQPVVARFAIKPTSSILTERRSIDSDGNEVDVRTKGRHDPCVGIRAVPIGEAMLACTIADHYLRDRGQTGRLK.

Residues Arg-48 and Arg-54 each contribute to the NADP(+) site. FMN contacts are provided by residues 131 to 133 (RSS), 243 to 244 (NA), Gly-288, 303 to 307 (KPTSS), and Arg-329.

It belongs to the chorismate synthase family. As to quaternary structure, homotetramer. The cofactor is FMNH2.

The enzyme catalyses 5-O-(1-carboxyvinyl)-3-phosphoshikimate = chorismate + phosphate. Its pathway is metabolic intermediate biosynthesis; chorismate biosynthesis; chorismate from D-erythrose 4-phosphate and phosphoenolpyruvate: step 7/7. Its function is as follows. Catalyzes the anti-1,4-elimination of the C-3 phosphate and the C-6 proR hydrogen from 5-enolpyruvylshikimate-3-phosphate (EPSP) to yield chorismate, which is the branch point compound that serves as the starting substrate for the three terminal pathways of aromatic amino acid biosynthesis. This reaction introduces a second double bond into the aromatic ring system. This chain is Chorismate synthase, found in Sinorhizobium fredii (strain NBRC 101917 / NGR234).